A 187-amino-acid chain; its full sequence is Peptidyl-tRNA hydrolase (187 aa).

TRNA is bound at residue Phe-14. His-19 acts as the Proton acceptor in catalysis. Residues Tyr-64, Asn-66, and Asn-112 each coordinate tRNA.

Belongs to the PTH family. In terms of assembly, monomer.

It localises to the cytoplasm. The enzyme catalyses an N-acyl-L-alpha-aminoacyl-tRNA + H2O = an N-acyl-L-amino acid + a tRNA + H(+). Hydrolyzes ribosome-free peptidyl-tRNAs (with 1 or more amino acids incorporated), which drop off the ribosome during protein synthesis, or as a result of ribosome stalling. In terms of biological role, catalyzes the release of premature peptidyl moieties from peptidyl-tRNA molecules trapped in stalled 50S ribosomal subunits, and thus maintains levels of free tRNAs and 50S ribosomes. In Oceanobacillus iheyensis (strain DSM 14371 / CIP 107618 / JCM 11309 / KCTC 3954 / HTE831), this protein is Peptidyl-tRNA hydrolase.